Consider the following 335-residue polypeptide: DNA-directed RNA polymerase subunit alpha (335 aa).

The tract at residues 1-231 is alpha N-terminal domain (alpha-NTD); sequence MVREKITVST…DLLIPFLHTK (231 aa). The interval 263–335 is alpha C-terminal domain (alpha-CTD); sequence KKMALKSIFI…FVIDLPKNKF (73 aa).

The protein belongs to the RNA polymerase alpha chain family. In plastids the minimal PEP RNA polymerase catalytic core is composed of four subunits: alpha, beta, beta', and beta''. When a (nuclear-encoded) sigma factor is associated with the core the holoenzyme is formed, which can initiate transcription.

It is found in the plastid. The protein resides in the chloroplast. The enzyme catalyses RNA(n) + a ribonucleoside 5'-triphosphate = RNA(n+1) + diphosphate. Functionally, DNA-dependent RNA polymerase catalyzes the transcription of DNA into RNA using the four ribonucleoside triphosphates as substrates. The chain is DNA-directed RNA polymerase subunit alpha from Helianthus annuus (Common sunflower).